The sequence spans 541 residues: Man(5)GlcNAc(2)-PP-dolichol translocation protein RFT1 (541 aa).

The next 11 helical transmembrane spans lie at 16–36, 45–62, 85–105, 123–143, 154–176, 187–207, 335–355, 376–396, 414–434, 470–490, and 499–519; these read SGLLLQVLFRLITFVLNAFIL, GIVNVRLTLLYSTTTFLA, LLWLTVPLGIFWSSCLGWVWL, VLFFGLSAVVELLGEPFWVLA, LAESMSVILRSVLTALLVLWLPH, LLYTTVLVLCYAIYLIQLLRS, LALLTGLTMTVFGFAYSQLAL, CLYVLLLAINGVTECFMFAAM, SFLVLSYLLTSWCGSVGFIMA, VLLGVFILSAGITSVSEAFLC, and LAHIAVGTICLGVTLGTAFLT.

This sequence belongs to the RFT1 family.

Its subcellular location is the endoplasmic reticulum membrane. It functions in the pathway protein modification; protein glycosylation. In terms of biological role, intramembrane glycolipid transporter that operates in the biosynthetic pathway of dolichol-linked oligosaccharides, the glycan precursors employed in protein asparagine (N)-glycosylation. The sequential addition of sugars to dolichol pyrophosphate produces dolichol-linked oligosaccharides containing fourteen sugars, including two GlcNAcs, nine mannoses and three glucoses. Once assembled, the oligosaccharide is transferred from the lipid to nascent proteins by oligosaccharyltransferases. The assembly of dolichol-linked oligosaccharides begins on the cytosolic side of the endoplasmic reticulum membrane and finishes in its lumen. RFT1 could mediate the translocation of the cytosolically oriented intermediate DolPP-GlcNAc2Man5, produced by ALG11, into the ER lumen where dolichol-linked oligosaccharides assembly continues. However, the intramembrane lipid transporter activity could not be confirmed in vitro. The chain is Man(5)GlcNAc(2)-PP-dolichol translocation protein RFT1 from Mus musculus (Mouse).